A 199-amino-acid polypeptide reads, in one-letter code: MMSKLICVARIGAAHGVRGEVRLWTFTEDPLAVLHYGPLTTKDGSRSFEVTKAREAKDHLVASFKGITDRNAAERLNGVELYVPRDRLPETDDDEYYHADLIGLAAETTAGAPLGRVLAIHNFGAGDIIEIAPPSGSTLMLPFTNAVVPTVDLAGGRVIIELPDEIDGEDRASADESASAEDDAAAPNSARHPRESGDP.

The PRC barrel domain occupies 93 to 169 (DDEYYHADLI…IELPDEIDGE (77 aa)). The segment at 164–199 (DEIDGEDRASADESASAEDDAAAPNSARHPRESGDP) is disordered.

It belongs to the RimM family. As to quaternary structure, binds ribosomal protein uS19.

The protein resides in the cytoplasm. In terms of biological role, an accessory protein needed during the final step in the assembly of 30S ribosomal subunit, possibly for assembly of the head region. Essential for efficient processing of 16S rRNA. May be needed both before and after RbfA during the maturation of 16S rRNA. It has affinity for free ribosomal 30S subunits but not for 70S ribosomes. This Bradyrhizobium sp. (strain ORS 278) protein is Ribosome maturation factor RimM.